A 353-amino-acid chain; its full sequence is Photosystem II D2 protein (353 aa).

At Thr-2 the chain carries N-acetylthreonine. Thr-2 carries the post-translational modification Phosphothreonine. The helical transmembrane segment at 41–61 (CAYFALGGWFTGTTFVTSWYT) threads the bilayer. His-118 serves as a coordination point for chlorophyll a. Residues 125–141 (GFMLRQFELARSVQLRP) form a helical membrane-spanning segment. The pheophytin a site is built by Gln-130 and Asn-143. A helical membrane pass occupies residues 153–166 (VFVSVFLIYPLGQS). His-198 provides a ligand contact to chlorophyll a. A helical membrane pass occupies residues 208 to 228 (AALLCAIHGATVENTLFEDGD). His-215 and Phe-262 together coordinate a plastoquinone. His-215 serves as a coordination point for Fe cation. His-269 serves as a coordination point for Fe cation. A helical membrane pass occupies residues 279-295 (GSWMSAIGVVGLALNLR).

The protein belongs to the reaction center PufL/M/PsbA/D family. As to quaternary structure, PSII is composed of 1 copy each of membrane proteins PsbA, PsbB, PsbC, PsbD, PsbE, PsbF, PsbH, PsbI, PsbJ, PsbK, PsbL, PsbM, PsbT, PsbX, PsbY, PsbZ, Psb30/Ycf12, at least 3 peripheral proteins of the oxygen-evolving complex and a large number of cofactors. It forms dimeric complexes. The D1/D2 heterodimer binds P680, chlorophylls that are the primary electron donor of PSII, and subsequent electron acceptors. It shares a non-heme iron and each subunit binds pheophytin, quinone, additional chlorophylls, carotenoids and lipids. There is also a Cl(-1) ion associated with D1 and D2, which is required for oxygen evolution. The PSII complex binds additional chlorophylls, carotenoids and specific lipids. serves as cofactor.

It is found in the plastid. It localises to the chloroplast thylakoid membrane. The enzyme catalyses 2 a plastoquinone + 4 hnu + 2 H2O = 2 a plastoquinol + O2. Functionally, photosystem II (PSII) is a light-driven water:plastoquinone oxidoreductase that uses light energy to abstract electrons from H(2)O, generating O(2) and a proton gradient subsequently used for ATP formation. It consists of a core antenna complex that captures photons, and an electron transfer chain that converts photonic excitation into a charge separation. The D1/D2 (PsbA/PsbD) reaction center heterodimer binds P680, the primary electron donor of PSII as well as several subsequent electron acceptors. D2 is needed for assembly of a stable PSII complex. This is Photosystem II D2 protein from Pinus koraiensis (Korean pine).